We begin with the raw amino-acid sequence, 252 residues long: Membrane protein insertase YidC (252 aa).

The N-terminal stretch at 1–20 (MRKKFGIIVALIALTTLLSG) is a signal peptide. Cysteine 21 carries the N-palmitoyl cysteine lipid modification. Residue cysteine 21 is the site of S-diacylglycerol cysteine attachment. Helical transmembrane passes span 59–79 (YGLA…PLNV), 129–149 (LAGC…YHAI), 160–180 (FLWF…GLFT), 206–226 (IMLY…PAAL), and 228–248 (LYWV…NKPM).

Belongs to the OXA1/ALB3/YidC family. Type 2 subfamily.

It localises to the cell membrane. In terms of biological role, required for the insertion and/or proper folding and/or complex formation of integral membrane proteins into the membrane. Involved in integration of membrane proteins that insert both dependently and independently of the Sec translocase complex, as well as at least some lipoproteins. The chain is Membrane protein insertase YidC from Oceanobacillus iheyensis (strain DSM 14371 / CIP 107618 / JCM 11309 / KCTC 3954 / HTE831).